Reading from the N-terminus, the 227-residue chain is Cytidylate kinase (227 aa).

ATP is bound at residue 12-20 (GPSGAGKGT).

It belongs to the cytidylate kinase family. Type 1 subfamily.

It localises to the cytoplasm. The enzyme catalyses CMP + ATP = CDP + ADP. It catalyses the reaction dCMP + ATP = dCDP + ADP. This chain is Cytidylate kinase, found in Photorhabdus laumondii subsp. laumondii (strain DSM 15139 / CIP 105565 / TT01) (Photorhabdus luminescens subsp. laumondii).